Here is a 114-residue protein sequence, read N- to C-terminus: Large ribosomal subunit protein uL18 (114 aa).

Belongs to the universal ribosomal protein uL18 family. As to quaternary structure, part of the 50S ribosomal subunit; part of the 5S rRNA/L5/L18/L25 subcomplex. Contacts the 23S rRNA. Contacts protein L27 and the 5S rRNA.

This is one of the proteins that bind and probably mediate the attachment of the 5S RNA into the large ribosomal subunit, where it forms part of the central protuberance. The protein is Large ribosomal subunit protein uL18 (rplR) of Deinococcus radiodurans (strain ATCC 13939 / DSM 20539 / JCM 16871 / CCUG 27074 / LMG 4051 / NBRC 15346 / NCIMB 9279 / VKM B-1422 / R1).